The sequence spans 146 residues: Hemoglobin subunit beta (146 aa).

The Globin domain occupies 2 to 146; it reads HWTAEEKQLI…VAHALARKYH (145 aa). Positions 63 and 92 each coordinate heme b.

Belongs to the globin family. In terms of assembly, heterotetramer of two alpha chains and two beta chains. Red blood cells.

Its function is as follows. Involved in oxygen transport from the lung to the various peripheral tissues. The protein is Hemoglobin subunit beta (HBB) of Phalacrocorax carbo (Great cormorant).